We begin with the raw amino-acid sequence, 185 residues long: Ribosome-recycling factor (185 aa).

The protein belongs to the RRF family.

Its subcellular location is the cytoplasm. Its function is as follows. Responsible for the release of ribosomes from messenger RNA at the termination of protein biosynthesis. May increase the efficiency of translation by recycling ribosomes from one round of translation to another. This Desulforapulum autotrophicum (strain ATCC 43914 / DSM 3382 / VKM B-1955 / HRM2) (Desulfobacterium autotrophicum) protein is Ribosome-recycling factor.